The primary structure comprises 495 residues: Protein painting of fourth (495 aa).

The interval 1 to 51 (MDSKRAALESGDGPDAKRLDTTDDQDKEASGGDGSQVMLAKHVAPYTGHGC) is disordered. One can recognise an RRM domain in the interval 215 to 289 (CSLYVGNIPF…RTLTVRYRRL (75 aa)). Positions 332 to 342 (ISDSDNCSDSS) are enriched in low complexity. Disordered stretches follow at residues 332–358 (ISDSDNCSDSSGNGKEDGKRKKKINEQ), 432–451 (PVPATKPTTQAQDDSQKKAK), and 461–495 (GPFRRGTSAMKTADEYEKDDRLEELYAQLERDPDP). A compositionally biased stretch (basic and acidic residues) spans 345 to 358 (GKEDGKRKKKINEQ). A Bipartite nuclear localization signal motif is present at residues 351-367 (RKKKINEQEREIEKLKR). Positions 472–495 (TADEYEKDDRLEELYAQLERDPDP) are enriched in basic and acidic residues.

Interacts with Zeste. Weakly expressed in embryos. Expression increases during larval and pupal stages. In adults, it is predominantly expressed in males, while it is weakly expressed in females.

It is found in the nucleus. The protein localises to the chromosome. Probable RNA-binding protein that specifically binds to the fourth chromosome and may bind an RNA that spreads the fourth chromosome. May be a reminiscence of X chromosome dosage compensation of ancestral Drosophila species in which the X and the fourth chromosomes are one single chromosome. This Drosophila melanogaster (Fruit fly) protein is Protein painting of fourth (Pof).